We begin with the raw amino-acid sequence, 360 residues long: Peptide chain release factor 1 (360 aa).

At Gln235 the chain carries N5-methylglutamine. Positions 284 to 293 (ARRQQEESST) are enriched in basic and acidic residues. The segment at 284–314 (ARRQQEESSTRRNLLGSGDRSDRNRTYNFPQ) is disordered.

It belongs to the prokaryotic/mitochondrial release factor family. Post-translationally, methylated by PrmC. Methylation increases the termination efficiency of RF1.

It localises to the cytoplasm. Peptide chain release factor 1 directs the termination of translation in response to the peptide chain termination codons UAG and UAA. The chain is Peptide chain release factor 1 from Erwinia tasmaniensis (strain DSM 17950 / CFBP 7177 / CIP 109463 / NCPPB 4357 / Et1/99).